The sequence spans 185 residues: Adenine phosphoribosyltransferase (185 aa).

This sequence belongs to the purine/pyrimidine phosphoribosyltransferase family. In terms of assembly, homodimer.

Its subcellular location is the cytoplasm. It carries out the reaction AMP + diphosphate = 5-phospho-alpha-D-ribose 1-diphosphate + adenine. Its pathway is purine metabolism; AMP biosynthesis via salvage pathway; AMP from adenine: step 1/1. Functionally, catalyzes a salvage reaction resulting in the formation of AMP, that is energically less costly than de novo synthesis. The chain is Adenine phosphoribosyltransferase from Pectobacterium atrosepticum (strain SCRI 1043 / ATCC BAA-672) (Erwinia carotovora subsp. atroseptica).